The sequence spans 188 residues: Protein-export protein SecB (188 aa).

Disordered stretches follow at residues 1-21 (MADE…EQPK) and 160-188 (RQKA…DTQQ). Over residues 176 to 188 (SDSTAAQGSDTQQ) the composition is skewed to polar residues.

This sequence belongs to the SecB family. As to quaternary structure, homotetramer, a dimer of dimers. One homotetramer interacts with 1 SecA dimer.

Its subcellular location is the cytoplasm. In terms of biological role, one of the proteins required for the normal export of preproteins out of the cell cytoplasm. It is a molecular chaperone that binds to a subset of precursor proteins, maintaining them in a translocation-competent state. It also specifically binds to its receptor SecA. The sequence is that of Protein-export protein SecB from Alkalilimnicola ehrlichii (strain ATCC BAA-1101 / DSM 17681 / MLHE-1).